The following is a 34-amino-acid chain: Potassium channel toxin alpha-KTx 6.13 (34 aa).

Intrachain disulfides connect C3/C24, C9/C29, C13/C31, and C19/C34. Residue C34 is modified to Cysteine amide.

This sequence belongs to the short scorpion toxin superfamily. Potassium channel inhibitor family. Alpha-KTx 06 subfamily. In terms of tissue distribution, expressed by the venom gland.

It localises to the secreted. Its function is as follows. Antagonist of Kv1/KCNA potassium channels. Shows a weak interaction with muscle-type nicotinic acetylcholine receptors (nAChR), since it inhibits alpha-bungarotoxin binding to both muscle-type nAChR from T.californica (IC(50)=490 nM). This suggests it probably weakly inhibits nAChR. In Heterometrus spinifer (Asia giant forest scorpion), this protein is Potassium channel toxin alpha-KTx 6.13.